Here is a 158-residue protein sequence, read N- to C-terminus: NAD(P)H-quinone oxidoreductase subunit J, chloroplastic (158 aa).

It belongs to the complex I 30 kDa subunit family. In terms of assembly, NDH is composed of at least 16 different subunits, 5 of which are encoded in the nucleus.

It localises to the plastid. The protein resides in the chloroplast thylakoid membrane. The enzyme catalyses a plastoquinone + NADH + (n+1) H(+)(in) = a plastoquinol + NAD(+) + n H(+)(out). The catalysed reaction is a plastoquinone + NADPH + (n+1) H(+)(in) = a plastoquinol + NADP(+) + n H(+)(out). Its function is as follows. NDH shuttles electrons from NAD(P)H:plastoquinone, via FMN and iron-sulfur (Fe-S) centers, to quinones in the photosynthetic chain and possibly in a chloroplast respiratory chain. The immediate electron acceptor for the enzyme in this species is believed to be plastoquinone. Couples the redox reaction to proton translocation, and thus conserves the redox energy in a proton gradient. The sequence is that of NAD(P)H-quinone oxidoreductase subunit J, chloroplastic from Nasturtium officinale (Watercress).